The sequence spans 77 residues: Metallothionein-like protein type 2 (77 aa).

This sequence belongs to the metallothionein superfamily. Type 15 family. Expressed in the left, stem and flower, at very low levels in roots and is not detectable in mesophyll protoplasts.

Functionally, metallothioneins have a high content of cysteine residues that bind various heavy metals. This chain is Metallothionein-like protein type 2 (MTI), found in Vicia faba (Broad bean).